Consider the following 445-residue polypeptide: Glutamyl-tRNA(Gln) amidotransferase subunit D (445 aa).

The Asparaginase/glutaminase domain occupies 93 to 425 (SEIKIISTGG…EKIRSLMISN (333 aa)). Catalysis depends on residues T103, T179, D180, and K258.

This sequence belongs to the asparaginase 1 family. GatD subfamily. Heterodimer of GatD and GatE.

It carries out the reaction L-glutamyl-tRNA(Gln) + L-glutamine + ATP + H2O = L-glutaminyl-tRNA(Gln) + L-glutamate + ADP + phosphate + H(+). In terms of biological role, allows the formation of correctly charged Gln-tRNA(Gln) through the transamidation of misacylated Glu-tRNA(Gln) in organisms which lack glutaminyl-tRNA synthetase. The reaction takes place in the presence of glutamine and ATP through an activated gamma-phospho-Glu-tRNA(Gln). The GatDE system is specific for glutamate and does not act on aspartate. This chain is Glutamyl-tRNA(Gln) amidotransferase subunit D, found in Saccharolobus islandicus (strain L.S.2.15 / Lassen #1) (Sulfolobus islandicus).